Consider the following 33-residue polypeptide: Photosystem II reaction center protein Psb30 (33 aa).

A helical membrane pass occupies residues 5 to 25 (VIAQPIVLGLIVASGPLVIVS).

It belongs to the Psb30/Ycf12 family. PSII is composed of 1 copy each of membrane proteins PsbA, PsbB, PsbC, PsbD, PsbE, PsbF, PsbH, PsbI, PsbJ, PsbK, PsbL, PsbM, PsbT, PsbX, PsbY, PsbZ, Psb30/Ycf12, peripheral proteins of the oxygen-evolving complex and a large number of cofactors. It forms dimeric complexes.

The protein localises to the plastid membrane. In terms of biological role, a core subunit of photosystem II (PSII), probably helps stabilize the reaction center. In Aneura mirabilis (Parasitic liverwort), this protein is Photosystem II reaction center protein Psb30.